The sequence spans 410 residues: Platelet-activating factor acetylhydrolase IB subunit beta (410 aa).

The required for self-association and interaction with PAFAH1B2 and PAFAH1B3 stretch occupies residues 1–38; sequence MVLSQRQRDELNRAIADYLRSNGYEEAYSVFKKEAELD. Positions 1–66 are interaction with NDE1; it reads MVLSQRQRDE…SVIRLQKKVM (66 aa). The interaction with NDEL1 stretch occupies residues 1-102; that stretch reads MVLSQRQRDE…EWIPRPPEKY (102 aa). The region spanning 7 to 39 is the LisH domain; that stretch reads QRDELNRAIADYLRSNGYEEAYSVFKKEAELDM. Lysine 53 is subject to N6-acetyllysine. Residues 56 to 82 are a coiled coil; that stretch reads TSVIRLQKKVMELESKLNEAKEEFTSG. Residues 83–410 are interaction with dynein and dynactin; the sequence is GPLGQKRDPK…DQTVKVWECR (328 aa). WD repeat units follow at residues 106–147, 148–187, 190–229, 232–271, 274–333, 336–377, and 378–410; these read GHRS…RTLK, GHTD…CIRT, GHDH…CVKT, GHRE…CKAE, EHEH…CLMT, GHDN…KTLN, and AHEH…WECR. A Phosphoserine modification is found at serine 109. The tract at residues 367 to 409 is interaction with DCX; that stretch reads YKNKRCMKTLNAHEHFVTSLDFHKTAPYVVTGSVDQTVKVWEC. Residues 388–410 are interaction with NDEL1; it reads FHKTAPYVVTGSVDQTVKVWECR.

The protein belongs to the WD repeat LIS1/nudF family. Can self-associate. Component of the cytosolic PAF-AH (I) heterotetrameric enzyme, which is composed of PAFAH1B1 (beta), PAFAH1B2 (alpha2) and PAFAH1B3 (alpha1) subunits. The catalytic activity of the enzyme resides in the alpha1 (PAFAH1B3) and alpha2 (PAFAH1B2) subunits, whereas the beta subunit (PAFAH1B1) has regulatory activity. Trimer formation is not essential for the catalytic activity. Interacts with the catalytic dimer of PAF-AH (I) heterotetrameric enzyme: interacts with PAFAH1B2 homodimer (alpha2/alpha2 homodimer), PAFAH1B3 homodimer (alpha1/alpha1 homodimer) and PAFAH1B2-PAFAH1B3 heterodimer (alpha2/alpha1 heterodimer). Interacts with DCX, dynein, dynactin, IQGAP1, KATNB1, NDE1, NDEL1, NUDC and RSN. Interacts with DISC1, and this interaction is enhanced by NDEL1. Interacts with DAB1 when DAB1 is phosphorylated in response to RELN/reelin signaling. Interacts with INTS13. Interacts with DCDC1.

The protein resides in the cytoplasm. It localises to the cytoskeleton. Its subcellular location is the microtubule organizing center. It is found in the centrosome. The protein localises to the spindle. The protein resides in the nucleus membrane. Functionally, regulatory subunit (beta subunit) of the cytosolic type I platelet-activating factor (PAF) acetylhydrolase (PAF-AH (I)), an enzyme that catalyzes the hydrolyze of the acetyl group at the sn-2 position of PAF and its analogs and participates in PAF inactivation. Regulates the PAF-AH (I) activity in a catalytic dimer composition-dependent manner. Positively regulates the activity of the minus-end directed microtubule motor protein dynein. May enhance dynein-mediated microtubule sliding by targeting dynein to the microtubule plus end. Required for several dynein- and microtubule-dependent processes such as the maintenance of Golgi integrity, the peripheral transport of microtubule fragments and the coupling of the nucleus and centrosome. Required during brain development for the proliferation of neuronal precursors and the migration of newly formed neurons from the ventricular/subventricular zone toward the cortical plate. Neuronal migration involves a process called nucleokinesis, whereby migrating cells extend an anterior process into which the nucleus subsequently translocates. During nucleokinesis dynein at the nuclear surface may translocate the nucleus towards the centrosome by exerting force on centrosomal microtubules. Also required for proper activation of Rho GTPases and actin polymerization at the leading edge of locomoting cerebellar neurons and postmigratory hippocampal neurons in response to calcium influx triggered via NMDA receptors. May also play a role in other forms of cell locomotion including the migration of fibroblasts during wound healing. Required for dynein recruitment to microtubule plus ends and BICD2-bound cargos. May modulate the Reelin pathway through interaction of the PAF-AH (I) catalytic dimer with VLDLR. The protein is Platelet-activating factor acetylhydrolase IB subunit beta of Felis catus (Cat).